Reading from the N-terminus, the 152-residue chain is UPF0225 protein YchJ (152 aa).

Belongs to the UPF0225 family.

This chain is UPF0225 protein YchJ, found in Escherichia coli O139:H28 (strain E24377A / ETEC).